The chain runs to 498 residues: Glycerol kinase (498 aa).

Thr12 contributes to the ADP binding site. Residues Thr12, Thr13, and Ser14 each contribute to the ATP site. Thr12 lines the sn-glycerol 3-phosphate pocket. Arg16 contacts ADP. Residues Arg82, Glu83, Tyr134, and Asp241 each coordinate sn-glycerol 3-phosphate. Arg82, Glu83, Tyr134, Asp241, and Gln242 together coordinate glycerol. 2 residues coordinate ADP: Thr263 and Gly310. ATP is bound by residues Thr263, Gly310, Gln314, and Gly411. ADP is bound by residues Gly411 and Asn415.

This sequence belongs to the FGGY kinase family.

It catalyses the reaction glycerol + ATP = sn-glycerol 3-phosphate + ADP + H(+). Its pathway is polyol metabolism; glycerol degradation via glycerol kinase pathway; sn-glycerol 3-phosphate from glycerol: step 1/1. Its activity is regulated as follows. Inhibited by fructose 1,6-bisphosphate (FBP). In terms of biological role, key enzyme in the regulation of glycerol uptake and metabolism. Catalyzes the phosphorylation of glycerol to yield sn-glycerol 3-phosphate. In Herminiimonas arsenicoxydans, this protein is Glycerol kinase.